Here is a 399-residue protein sequence, read N- to C-terminus: S-adenosylmethionine synthase (399 aa).

ATP is bound at residue His15. Asp17 provides a ligand contact to Mg(2+). Glu43 contacts K(+). 2 residues coordinate L-methionine: Glu56 and Gln99. The interval 99-109 (QSADIAQGVDN) is flexible loop. Residues 174 to 176 (DGK), 244 to 245 (RF), Asp253, 259 to 260 (RK), Ala276, and Lys280 each bind ATP. Residue Asp253 participates in L-methionine binding. Lys284 provides a ligand contact to L-methionine.

Belongs to the AdoMet synthase family. Homotetramer; dimer of dimers. The cofactor is Mg(2+). Requires K(+) as cofactor.

It localises to the cytoplasm. It catalyses the reaction L-methionine + ATP + H2O = S-adenosyl-L-methionine + phosphate + diphosphate. The protein operates within amino-acid biosynthesis; S-adenosyl-L-methionine biosynthesis; S-adenosyl-L-methionine from L-methionine: step 1/1. Functionally, catalyzes the formation of S-adenosylmethionine (AdoMet) from methionine and ATP. The overall synthetic reaction is composed of two sequential steps, AdoMet formation and the subsequent tripolyphosphate hydrolysis which occurs prior to release of AdoMet from the enzyme. This is S-adenosylmethionine synthase from Salinispora tropica (strain ATCC BAA-916 / DSM 44818 / JCM 13857 / NBRC 105044 / CNB-440).